The primary structure comprises 283 residues: Nucleoid occlusion protein (283 aa).

The H-T-H motif DNA-binding region spans 142–161 (ESLAQRLGKGQSTIANKLRL).

It belongs to the ParB family.

Its subcellular location is the cytoplasm. It is found in the nucleoid. Functionally, effects nucleoid occlusion by binding relatively nonspecifically to DNA and preventing the assembly of the division machinery in the vicinity of the nucleoid, especially under conditions that disturb the cell cycle. It helps to coordinate cell division and chromosome segregation by preventing the formation of the Z ring through the nucleoid, which would cause chromosome breakage. In Shouchella clausii (strain KSM-K16) (Alkalihalobacillus clausii), this protein is Nucleoid occlusion protein.